The primary structure comprises 327 residues: D-threonate 4-phosphate dehydrogenase (327 aa).

2 residues coordinate substrate: His139 and Thr140. Residues His169, His213, and His268 each coordinate a divalent metal cation. 3 residues coordinate substrate: Lys276, Asn285, and Arg294.

Belongs to the PdxA family. PdxA2 subfamily. As to quaternary structure, homodimer. The cofactor is a divalent metal cation.

The catalysed reaction is 4-O-phospho-D-threonate + NAD(+) = dihydroxyacetone phosphate + CO2 + NADH. Catalyzes the NAD-dependent oxidation and subsequent decarboxylation of D-threonate 4-phosphate to produce dihydroxyacetone phosphate (DHAP). Can also use 4-hydroxy-L-threonine 4-phosphate as substrate. The protein is D-threonate 4-phosphate dehydrogenase of Salmonella typhimurium (strain LT2 / SGSC1412 / ATCC 700720).